Here is a 68-residue protein sequence, read N- to C-terminus: Small ribosomal subunit protein bS21 (68 aa).

This sequence belongs to the bacterial ribosomal protein bS21 family.

This Ruegeria pomeroyi (strain ATCC 700808 / DSM 15171 / DSS-3) (Silicibacter pomeroyi) protein is Small ribosomal subunit protein bS21.